A 353-amino-acid chain; its full sequence is Photosystem II protein D1 (353 aa).

Thr2 is subject to N-acetylthreonine. Thr2 bears the Phosphothreonine mark. Helical transmembrane passes span 29–46 (YIGWFGVLMIPTLLTATS), 118–133 (HFLLGVACYMGREWEL), and 142–156 (WIAVAYSAPVAAATA). Chlorophyll a is bound at residue His118. Residue Tyr126 coordinates pheophytin a. Residues Asp170 and Glu189 each contribute to the [CaMn4O5] cluster site. A helical transmembrane segment spans residues 197 to 218 (FHMLGVAGVFGGSLFSAMHGSL). Chlorophyll a is bound at residue His198. Residues His215 and 264–265 (SF) each bind a quinone. His215 contacts Fe cation. Fe cation is bound at residue His272. A helical transmembrane segment spans residues 274 to 288 (FLAAWPVVGIWFTAL). [CaMn4O5] cluster-binding residues include His332, Glu333, Asp342, and Ala344. A propeptide spanning residues 345 to 353 (AVEAPAVNG) is cleaved from the precursor.

Belongs to the reaction center PufL/M/PsbA/D family. As to quaternary structure, PSII is composed of 1 copy each of membrane proteins PsbA, PsbB, PsbC, PsbD, PsbE, PsbF, PsbH, PsbI, PsbJ, PsbK, PsbL, PsbM, PsbT, PsbX, PsbY, PsbZ, Psb30/Ycf12, at least 3 peripheral proteins of the oxygen-evolving complex and a large number of cofactors. It forms dimeric complexes. The D1/D2 heterodimer binds P680, chlorophylls that are the primary electron donor of PSII, and subsequent electron acceptors. It shares a non-heme iron and each subunit binds pheophytin, quinone, additional chlorophylls, carotenoids and lipids. D1 provides most of the ligands for the Mn4-Ca-O5 cluster of the oxygen-evolving complex (OEC). There is also a Cl(-1) ion associated with D1 and D2, which is required for oxygen evolution. The PSII complex binds additional chlorophylls, carotenoids and specific lipids. is required as a cofactor. In terms of processing, tyr-161 forms a radical intermediate that is referred to as redox-active TyrZ, YZ or Y-Z. C-terminally processed by CTPA; processing is essential to allow assembly of the oxygen-evolving complex and thus photosynthetic growth.

The protein localises to the plastid. The protein resides in the chloroplast thylakoid membrane. It carries out the reaction 2 a plastoquinone + 4 hnu + 2 H2O = 2 a plastoquinol + O2. In terms of biological role, photosystem II (PSII) is a light-driven water:plastoquinone oxidoreductase that uses light energy to abstract electrons from H(2)O, generating O(2) and a proton gradient subsequently used for ATP formation. It consists of a core antenna complex that captures photons, and an electron transfer chain that converts photonic excitation into a charge separation. The D1/D2 (PsbA/PsbD) reaction center heterodimer binds P680, the primary electron donor of PSII as well as several subsequent electron acceptors. This Conocephalum conicum (Snakeskin liverwort) protein is Photosystem II protein D1.